Here is a 476-residue protein sequence, read N- to C-terminus: ENTH domain-containing protein C794.11c (476 aa).

The region spanning 30 to 154 (YTSMEARVRE…VELLNDSERI (125 aa)) is the ENTH domain. Disordered regions lie at residues 157-198 (ERKR…GSYR), 213-308 (NGYH…GFGD), 410-429 (QAGLGLTSQQPTAAKSSGSN), and 444-472 (VHQENSTRERVVSSSSEPVSKTQNFLDND). Phosphoserine is present on S173. 2 stretches are compositionally biased toward low complexity: residues 178–198 (RISTSSKSRFPSFGSSRGSYR) and 213–222 (NGYHDSSSMS). Residue S228 is modified to Phosphoserine. Over residues 229-240 (DNDVEEYNEDGD) the composition is skewed to acidic residues. At Y235 the chain carries Phosphotyrosine. S243 and S244 each carry phosphoserine. Basic and acidic residues predominate over residues 262 to 271 (QSDKAPEQPK). The span at 444–454 (VHQENSTRERV) shows a compositional bias: basic and acidic residues. Position 459 is a phosphoserine (S459).

This is ENTH domain-containing protein C794.11c from Schizosaccharomyces pombe (strain 972 / ATCC 24843) (Fission yeast).